The primary structure comprises 709 residues: MSRIIMLIPLNKKVSLTTISLSILYFFNKKEQKNCFKSFSYLPLIKSDNINFIRAYFSKKINVLDDINFFKKNFNSDEYSYLLDKIIKECFNKKKINEFILIKGISRKEHDDADQINFDIAQNIDAEVIFIDNLKDFSLGCFKRKERKINVFLQQKKYKNFLGLIFSDINSPFIFNKMKYNFFDKLIILKNTKKNTCIHAIKKNIFFNSFFRVIAFIPWNKKLVKSSVINIFKFLNATLVNTISIKDAFIKNITIFDEDSSVILKKSYANTLVLISSSRMETFFKTLYLVCKSKKIGAILLTGVLKLSENSIKLLKFLTNQGVPVFFIKENTVETLSQLQKFNFNINVQNKYFINKLLEYTSSFFNKNHLISLKKKTTNFYKKTYSPKEFCYRLKILSKSKHKRIILPESYEPRILKAASICHRLGIAECILLGDPKKIYNIANENKIDLNKNIEIKDPILIRDQYVPRLLEIRKNKKIDEIFARKQLKDNVILATLILESGKVDGLVSGTINTTANTIRPALQIIKTDPIYSLVSSIFFILLPNEVLIYGDCAINIEPNSKELAEIAIQSANSAKMFGIEPRIAMLSYSTGFSGTGWQVEKIRDATSIVKSKRPDLLIDGPIQYDAAISKEVAKLKIPYSSILGSANIFIFPDLNSGNITYKAVQRSADLICIGPMLQGLKKPVNDLSRGASVEDIVYTIALTSIQSL.

Residues 389-709 (EFCYRLKILS…TIALTSIQSL (321 aa)) form a phosphate acetyltransferase region.

This sequence in the N-terminal section; belongs to the CobB/CobQ family. The protein in the C-terminal section; belongs to the phosphate acetyltransferase and butyryltransferase family. In terms of assembly, homohexamer.

It localises to the cytoplasm. It carries out the reaction acetyl-CoA + phosphate = acetyl phosphate + CoA. It participates in metabolic intermediate biosynthesis; acetyl-CoA biosynthesis; acetyl-CoA from acetate: step 2/2. Its function is as follows. Involved in acetate metabolism. The protein is Phosphate acetyltransferase (pta) of Buchnera aphidicola subsp. Schizaphis graminum (strain Sg).